The following is a 146-amino-acid chain: Angiogenin (146 aa).

A signal peptide spans 1-24 (MVMGLGLFLLVFMLGLGLTSPTLA). Pyrrolidone carboxylic acid is present on Gln25. The Proton acceptor role is filled by His37. TRNA is bound at residue Arg45. 3 disulfide bridges follow: Cys50/Cys105, Cys63/Cys116, and Cys81/Cys131. Positions 55 to 59 (RRQGM) match the Nucleolar localization signal motif. Residues Cys105 and Ile127 each contribute to the tRNA site. The active-site Proton donor is the His138.

This sequence belongs to the pancreatic ribonuclease family. Homodimer. Interacts with RNH1; inhibiting ANG ribonuclease activity. Interacts with PCNA.

It localises to the secreted. Its subcellular location is the nucleus. It is found in the nucleolus. The protein localises to the cytoplasm. The protein resides in the stress granule. Has weak tRNA ribonuclease activity by itself due to partial autoinhibition by its C-terminus, which folds into a short alpha-helix that partially occludes the substrate-binding site. In absence of stress, the ribonuclease activity is inhibited by RNH1 in the cytoplasm. In response to stress, dissociates from RNH1 in the cytoplasm and associates with cytoplasmic ribosomes with vacant A-sites: ribosomes directly activate the tRNA ribonuclease activity of ANG by refolding the C-terminal alpha-helix. In response to stress, the angiogenic activity of ANG is inhibited by RNH1 in the nucleus. In terms of biological role, secreted ribonuclease that can either promote or restrict cell proliferation of target cells, depending on the context. Endocytosed in target cells via its receptor PLXNB2 and translocates to the cytoplasm or nucleus. Under stress conditions, localizes to the cytoplasm and promotes the assembly of stress granules (SGs): specifically cleaves a subset of tRNAs within anticodon loops to produce tRNA-derived stress-induced fragments (tiRNAs), resulting in translation repression and inhibition of cell proliferation. tiRNas also prevent formation of apoptosome, thereby promoting cell survival. Preferentially cleaves RNAs between a pyrimidine and an adenosine residue, suggesting that it cleaves the anticodon loop of tRNA(Ala) (32-UUAGCAU-38) after positions 33 and 36. Cleaves a subset of tRNAs, including tRNA(Ala), tRNA(Glu), tRNA(Gly), tRNA(Lys), tRNA(Val), tRNA(His), tRNA(Asp) and tRNA(Sec). Under growth conditions and in differentiated cells, translocates to the nucleus and stimulates ribosomal RNA (rRNA) transcription, including that containing the initiation site sequences of 45S rRNA, thereby promoting cell growth and proliferation. Angiogenin induces vascularization of normal and malignant tissues via its ability to promote rRNA transcription. Involved in hematopoietic stem and progenitor cell (HSPC) growth and survival by promoting rRNA transcription in growth conditions and inhibiting translation in response to stress, respectively. Mediates the crosstalk between myeloid and intestinal epithelial cells to protect the intestinal epithelial barrier integrity: secreted by myeloid cells and promotes intestinal epithelial cells proliferation and survival. Also mediates osteoclast-endothelial cell crosstalk in growing bone: produced by osteoclasts and protects the neighboring vascular cells against senescence by promoting rRNA transcription. The polypeptide is Angiogenin (ANG) (Miopithecus talapoin (Angolan talapoin)).